The chain runs to 53 residues: UPF0391 membrane protein PA5482 (53 aa).

Transmembrane regions (helical) follow at residues 4 to 24 (WAIT…GGIA) and 29 to 49 (GIAK…FFFG).

The protein belongs to the UPF0391 family.

The protein localises to the cell membrane. The sequence is that of UPF0391 membrane protein PA5482 from Pseudomonas aeruginosa (strain ATCC 15692 / DSM 22644 / CIP 104116 / JCM 14847 / LMG 12228 / 1C / PRS 101 / PAO1).